The sequence spans 113 residues: Gonadotropin subunit beta (113 aa).

6 cysteine pairs are disulfide-bonded: Cys-6/Cys-54, Cys-20/Cys-69, Cys-23/Cys-107, Cys-31/Cys-85, Cys-35/Cys-87, and Cys-90/Cys-97. Asn-10 is a glycosylation site (N-linked (GlcNAc...) asparagine).

The protein belongs to the glycoprotein hormones subunit beta family. In terms of assembly, heterodimer of an alpha and a beta chain.

The protein resides in the secreted. Functionally, involved in gametogenesis and steroidogenesis. The sequence is that of Gonadotropin subunit beta (cgb) from Muraenesox cinereus (Daggertooth pike conger).